The chain runs to 446 residues: Na(+)-translocating NADH-quinone reductase subunit A (446 aa).

It belongs to the NqrA family. As to quaternary structure, composed of six subunits; NqrA, NqrB, NqrC, NqrD, NqrE and NqrF.

It catalyses the reaction a ubiquinone + n Na(+)(in) + NADH + H(+) = a ubiquinol + n Na(+)(out) + NAD(+). NQR complex catalyzes the reduction of ubiquinone-1 to ubiquinol by two successive reactions, coupled with the transport of Na(+) ions from the cytoplasm to the periplasm. NqrA to NqrE are probably involved in the second step, the conversion of ubisemiquinone to ubiquinol. In Vibrio vulnificus (strain CMCP6), this protein is Na(+)-translocating NADH-quinone reductase subunit A.